The following is a 302-amino-acid chain: Heme A synthase (302 aa).

The Cytoplasmic segment spans residues 1–6; sequence MNKALK. Residues 7–27 form a helical membrane-spanning segment; the sequence is GLGIITTIAMLFVLIGGALVT. Residues 28 to 61 are Extracellular-facing; the sequence is KTGSGMGCGRSWPLCNGSIFPALTLESIIEWSHR. The cysteines at positions 35 and 42 are disulfide-linked. Glu-57 is a catalytic residue. His-60 contacts heme o. The helical transmembrane segment at 62-82 threads the bilayer; the sequence is FVSGTSGVLVLALAIWTWKKI. Over 83-91 the chain is Cytoplasmic; it reads GHIRETKFL. Residues 92–112 form a helical membrane-spanning segment; the sequence is AVMSVVFLILQALLGAAAVVF. The Extracellular segment spans residues 113–120; sequence GSSALIMA. A helical transmembrane segment spans residues 121–141; sequence LHFGISLISFASVLLLTLLVF. His-122 provides a ligand contact to heme o. The Cytoplasmic segment spans residues 142–158; it reads EADSKQKSESFYIGKTM. The chain crosses the membrane as a helical span at residues 159-179; that stretch reads QFHMIGIIIYTYVVVYTGAYV. The Extracellular portion of the chain corresponds to 180 to 208; that stretch reads RHTSSSLACLDFPMCSTENGWLPGKFHEW. Cys-188 and Cys-194 are joined by a disulfide. A helical transmembrane segment spans residues 209–229; the sequence is VQMGHRAAALLLFAWIIAAAV. His-213 serves as a coordination point for heme b. Residues 230 to 242 are Cytoplasmic-facing; the sequence is HAARQYKNQKRIY. A helical membrane pass occupies residues 243 to 263; that stretch reads WGWMISLILIILQAASGIAVV. Over 264–272 the chain is Extracellular; sequence YSRLDLGFA. A helical transmembrane segment spans residues 273–293; that stretch reads LAHAFFISCLFGILCYFLLLV. His-275 is a binding site for heme b. Residues 294-302 are Cytoplasmic-facing; the sequence is ARYRRQVQK.

It belongs to the COX15/CtaA family. Type 1 subfamily. As to quaternary structure, interacts with CtaB. It depends on heme b as a cofactor.

The protein localises to the cell membrane. The enzyme catalyses Fe(II)-heme o + 2 A + H2O = Fe(II)-heme a + 2 AH2. It functions in the pathway porphyrin-containing compound metabolism; heme A biosynthesis; heme A from heme O: step 1/1. Functionally, catalyzes the conversion of heme O to heme A by two successive hydroxylations of the methyl group at C8. The first hydroxylation forms heme I, the second hydroxylation results in an unstable dihydroxymethyl group, which spontaneously dehydrates, resulting in the formyl group of heme A. The polypeptide is Heme A synthase (Bacillus licheniformis (strain ATCC 14580 / DSM 13 / JCM 2505 / CCUG 7422 / NBRC 12200 / NCIMB 9375 / NCTC 10341 / NRRL NRS-1264 / Gibson 46)).